Reading from the N-terminus, the 94-residue chain is Co-chaperonin GroES (94 aa).

This sequence belongs to the GroES chaperonin family. Heptamer of 7 subunits arranged in a ring. Interacts with the chaperonin GroEL.

The protein localises to the cytoplasm. In terms of biological role, together with the chaperonin GroEL, plays an essential role in assisting protein folding. The GroEL-GroES system forms a nano-cage that allows encapsulation of the non-native substrate proteins and provides a physical environment optimized to promote and accelerate protein folding. GroES binds to the apical surface of the GroEL ring, thereby capping the opening of the GroEL channel. This Listeria innocua serovar 6a (strain ATCC BAA-680 / CLIP 11262) protein is Co-chaperonin GroES.